A 331-amino-acid chain; its full sequence is Vitamin B12 import system permease protein BtuC (331 aa).

The next 9 membrane-spanning stretches (helical) occupy residues 18-38 (WLFG…CAGE), 64-84 (LAVL…QALF), 91-111 (PGLL…VLLG), 114-134 (VLPG…ITFI), 149-169 (LLAG…AVYF), 194-214 (LWLM…SQPL), 243-263 (GWMV…GLVI), 277-297 (VLLP…DIIA), and 305-325 (ELPI…WLLL).

The protein belongs to the binding-protein-dependent transport system permease family. FecCD subfamily. As to quaternary structure, the complex is composed of two ATP-binding proteins (BtuD), two transmembrane proteins (BtuC) and a solute-binding protein (BtuF).

The protein resides in the cell inner membrane. In terms of biological role, part of the ABC transporter complex BtuCDF involved in vitamin B12 import. Involved in the translocation of the substrate across the membrane. This is Vitamin B12 import system permease protein BtuC from Klebsiella pneumoniae subsp. pneumoniae (strain ATCC 700721 / MGH 78578).